The chain runs to 23 residues: Apolipophorin-1 (23 aa).

The span at 1 to 15 (SVKSEVDNFDKHLKA) shows a compositional bias: basic and acidic residues. Residues 1 to 23 (SVKSEVDNFDKHLKAESAPFNNE) form a disordered region.

Expressed in hemolymph.

It localises to the secreted. Constitutes the major component of lipophorin, which mediates transport for various types of lipids in hemolymph. Acts by forming lipoprotein particles that bind lipoproteins and lipids. In Galleria mellonella (Greater wax moth), this protein is Apolipophorin-1.